The following is an 80-amino-acid chain: Ubiquinol-cytochrome c reductase complex assembly factor 5 (80 aa).

Residues 1 to 19 (MFSRAQVRRALQRVPGKQR) lie on the Mitochondrial matrix side of the membrane. A helical transmembrane segment spans residues 20-41 (FGIYRFLPFFFVLGGAMEWIMI). Topologically, residues 42 to 80 (KVRVGQETFYDVYRRKASERQYQRRLEDTSETNLHKLIK) are mitochondrial intermembrane.

Belongs to the UQCC5 family. In terms of assembly, associates with the mitochondrial ribosome. Interacts with UQCC6. Interacts with MT-CYB; interacts with newly synthesizes MT-CYB. Forms a complex, named COMB/coordinator of mitochondrial CYTB biogenesis, composed of UQCC1, UQCC2, UQCC4, UQCC5 and UQCC6; stabilizes nascent cytochrome b/MT-CYB and promotes its membrane insertion.

It is found in the mitochondrion inner membrane. In terms of biological role, required for the assembly and stability of the mitochondrial ubiquinol-cytochrome c reductase complex (complex III (CIII) or cytochrome b-c1 complex), a multisubunit transmembrane complex that is part of the mitochondrial electron transport chain (ETC) which drives oxidative phosphorylation. Mediates early complex III biogenesis. Participates in regulating the levels of electron transport chain proteins, and therefore energy supply, in response to changes in energy demand. Also required for cytochrome c oxidase complex (complex IV) assembly. This Mus musculus (Mouse) protein is Ubiquinol-cytochrome c reductase complex assembly factor 5.